The following is a 499-amino-acid chain: Cobyric acid synthase (499 aa).

Residues 251–442 (SLDIAVVSLK…LHGVFDNLEW (192 aa)) enclose the GATase cobBQ-type domain. Residue Cys332 is the Nucleophile of the active site. His434 is an active-site residue.

This sequence belongs to the CobB/CobQ family. CobQ subfamily.

The protein operates within cofactor biosynthesis; adenosylcobalamin biosynthesis. Its function is as follows. Catalyzes amidations at positions B, D, E, and G on adenosylcobyrinic A,C-diamide. NH(2) groups are provided by glutamine, and one molecule of ATP is hydrogenolyzed for each amidation. The polypeptide is Cobyric acid synthase (Streptococcus sanguinis (strain SK36)).